The primary structure comprises 96 residues: Small cysteine and glycine repeat-containing protein 7 (96 aa).

The interval 4–80 is 14 X 2 AA repeats of CG; it reads CGCGSCGGCG…TCGSCGCGCG (77 aa).

Belongs to the KRTAP type 28 family.

Its function is as follows. In the hair cortex, hair keratin intermediate filaments are embedded in an interfilamentous matrix, consisting of hair keratin-associated proteins (KRTAP), which are essential for the formation of a rigid and resistant hair shaft through their extensive disulfide bond cross-linking with abundant cysteine residues of hair keratins. The matrix proteins include the high-sulfur and high-glycine-tyrosine keratins. In Homo sapiens (Human), this protein is Small cysteine and glycine repeat-containing protein 7.